Here is a 75-residue protein sequence, read N- to C-terminus: MKSKPDDRRDNVDRIQQSIDNTIENIHETNEMIENTNREKNKDDLKAKNCRREAALDEFKSEIKDEARAKEKGYK.

This sequence belongs to the Tlp family.

The polypeptide is Protein Tlp homolog (Clostridium acetobutylicum (strain ATCC 824 / DSM 792 / JCM 1419 / IAM 19013 / LMG 5710 / NBRC 13948 / NRRL B-527 / VKM B-1787 / 2291 / W)).